The sequence spans 189 residues: Putative ankyrin repeat protein L38 (189 aa).

The stretch at 108–137 is one ANK repeat; sequence YGKTPLITAIKSGNCIMVKKLIDYGADFNK.

The chain is Putative ankyrin repeat protein L38 from Acanthamoeba polyphaga mimivirus (APMV).